Reading from the N-terminus, the 344-residue chain is MSNAITMGIFWHLIGAASAACFYAPFKKVKKWSWETMWSVGGIVSWIILPWAISALLLPNFWAYYSSFSLSTLLPVFLFGAMWGIGNINYGLTMRYLGMSMGIGIAIGITLIVGTLMTPIINGNFDVLINTEGGRMTLLGVLVALIGVGIVTRAGQLKERKMGIKAEEFNLKKGLVLAVMCGIFSAGMSFAMNAAKPMHEAAAALGVDPLYVALPSYVVIMGGGAIINLGFCFIRLAKVKDLSLKADFSLAKPLIIHNVLLSALGGLMWYLQFFFYAWGHARIPAQYDYISWMLHMSFYVLCGGIVGLVLKEWNNAGRRPVTVLSLGCVVIIVAANIVGIGMAN.

Transmembrane regions (helical) follow at residues 4–24 (AITM…CFYA), 38–58 (WSVG…ALLL), 68–88 (FSLS…IGNI), 101–121 (MGIG…TPII), 137–157 (TLLG…AGQL), 175–195 (LVLA…MNAA), 214–234 (LPSY…FCFI), 259–279 (VLLS…YAWG), 290–310 (ISWM…GLVL), and 323–343 (VLSL…IGMA).

This sequence belongs to the L-rhamnose transporter (TC 2.A.7.6) family.

It is found in the cell inner membrane. The enzyme catalyses L-rhamnopyranose(in) + H(+)(in) = L-rhamnopyranose(out) + H(+)(out). In terms of biological role, uptake of L-rhamnose across the cytoplasmic membrane with the concomitant transport of protons into the cell (symport system). This chain is L-rhamnose-proton symporter, found in Escherichia coli O127:H6 (strain E2348/69 / EPEC).